A 95-amino-acid chain; its full sequence is UPF0235 protein A2cp1_1215 (95 aa).

This sequence belongs to the UPF0235 family.

The polypeptide is UPF0235 protein A2cp1_1215 (Anaeromyxobacter dehalogenans (strain 2CP-1 / ATCC BAA-258)).